The sequence spans 553 residues: Protein PNS1 (553 aa).

Residues 1-53 are disordered; that stretch reads MFGEGNKPTEPVPAYDAGQDPFQGPNASKNQYQGSAADYNGAPPPPASQPGNQ. At 1–94 the chain is on the cytoplasmic side; sequence MFGEGNKPTE…EDSKPKWNDW (94 aa). Over residues 25–34 the composition is skewed to polar residues; sequence PNASKNQYQG. A helical transmembrane segment spans residues 95–115; that stretch reads PFTIFFAGCVIAFIVVAAITL. The Extracellular portion of the chain corresponds to 116–142; sequence RAWSQNSSSQGSGVYDGANTGTLTTNS. The N-linked (GlcNAc...) asparagine glycan is linked to asparagine 121. The chain crosses the membrane as a helical span at residues 143–163; it reads AIMLAISCIIAFVFSIIGIVL. Topologically, residues 164 to 169 are cytoplasmic; the sequence is ARMFPK. The chain crosses the membrane as a helical span at residues 170 to 190; that stretch reads FFIIAGILFNIIAGLATAIMY. Topologically, residues 191-192 are extracellular; it reads LS. Residues 193–213 form a helical membrane-spanning segment; the sequence is LKYYSAGIVFLVFTAICALFY. At 214–241 the chain is on the cytoplasmic side; it reads WRMRHRIPFTVAVLKTVMDVMKSYPQTW. The chain crosses the membrane as a helical span at residues 242 to 262; that stretch reads FVTLIGSIIATAFSILFSAVI. Residues 263–287 are Extracellular-facing; it reads VATYMKYDDKANNPGCSTNGGSCSN. A helical transmembrane segment spans residues 288–308; it reads AKLIGLLVLVFFCGYYIAEVI. At 309–349 the chain is on the cytoplasmic side; sequence RNVIHCTVSGIFGAWYYFSKSDQGMPKWPGFGALKRSLTYS. A helical membrane pass occupies residues 350–370; that stretch reads FGSICFGSLIVTIIETLKAVL. Residues 371–385 are Extracellular-facing; the sequence is RLAVDGVMGGGGADN. A helical membrane pass occupies residues 386-406; it reads GWMQCLALIANWIFSFLEWLA. The Cytoplasmic segment spans residues 407-450; the sequence is RYFNHYAYVFIALYGKPYLRAAKETWYMLREKGIDALINDNLVN. A helical membrane pass occupies residues 451–471; that stretch reads VALSFFTLFTCYITTLFAYLY. Residues 472–484 lie on the Extracellular side of the membrane; the sequence is LRYTDPNYNDNNN. The helical transmembrane segment at 485–505 threads the bilayer; it reads FTPALMAFAFVIAMEICNVIT. The Cytoplasmic portion of the chain corresponds to 506-553; sequence ETIRSGTATFFVALGNDPEVFHLSYPERFDEIFRAYPEVLKKLSHQNV.

The protein belongs to the CTL (choline transporter-like) family.

It is found in the cell membrane. In terms of biological role, probably involved in transport through the plasma membrane. The polypeptide is Protein PNS1 (PNS1) (Kluyveromyces lactis (strain ATCC 8585 / CBS 2359 / DSM 70799 / NBRC 1267 / NRRL Y-1140 / WM37) (Yeast)).